Here is a 723-residue protein sequence, read N- to C-terminus: Heme/hemopexin utilization protein C (723 aa).

A signal peptide spans 1–21 (MRFSKLSLAITTTLVTANALA). The region spanning 36–147 (DPSRFAYTPE…LGGVVAMRTP (112 aa)) is the TBDR plug domain. Residues 158–723 (KFGVKIRQGY…NAKISAVYSF (566 aa)) form the TBDR beta-barrel domain. Positions 706–723 (SLMEGTGRNAKISAVYSF) match the TonB C-terminal box motif.

This sequence belongs to the TonB-dependent receptor family.

It is found in the cell outer membrane. Its function is as follows. Required for utilization of free heme at low concentrations. The protein is Heme/hemopexin utilization protein C (hxuC) of Haemophilus influenzae (strain ATCC 51907 / DSM 11121 / KW20 / Rd).